Reading from the N-terminus, the 56-residue chain is Small ribosomal subunit protein uS14 (56 aa).

Cysteine 21, cysteine 24, cysteine 39, and cysteine 42 together coordinate Zn(2+).

It belongs to the universal ribosomal protein uS14 family. As to quaternary structure, component of the small ribosomal subunit (SSU). Mature N.crassa ribosomes consist of a small (40S) and a large (60S) subunit. The 40S small subunit contains 1 molecule of ribosomal RNA (18S rRNA) and at least 32 different proteins. The large 60S subunit contains 3 rRNA molecules (26S, 5.8S and 5S rRNA) and at least 42 different proteins. Zn(2+) is required as a cofactor.

The protein localises to the cytoplasm. In terms of biological role, component of the ribosome, a large ribonucleoprotein complex responsible for the synthesis of proteins in the cell. The small ribosomal subunit (SSU) binds messenger RNAs (mRNAs) and translates the encoded message by selecting cognate aminoacyl-transfer RNA (tRNA) molecules. The large subunit (LSU) contains the ribosomal catalytic site termed the peptidyl transferase center (PTC), which catalyzes the formation of peptide bonds, thereby polymerizing the amino acids delivered by tRNAs into a polypeptide chain. The nascent polypeptides leave the ribosome through a tunnel in the LSU and interact with protein factors that function in enzymatic processing, targeting, and the membrane insertion of nascent chains at the exit of the ribosomal tunnel. The protein is Small ribosomal subunit protein uS14 (rps-29) of Neurospora crassa (strain ATCC 24698 / 74-OR23-1A / CBS 708.71 / DSM 1257 / FGSC 987).